Reading from the N-terminus, the 521-residue chain is Zinc finger CCCH domain-containing protein 45 (521 aa).

3 disordered regions span residues 28-60 (TEDS…GFEG), 142-185 (TPAI…PLCS), and 296-319 (SRSF…ISPP). Residues 34–43 (NVASQPQRHS) show a composition bias toward polar residues. A compositionally biased stretch (low complexity) spans 159-168 (EESSNSKVES). Over residues 170 to 185 (VTANKQGQLETKPLCS) the composition is skewed to polar residues. Residues 469 to 497 (NKIHQQCIYFGTANGCNMGDSCTYVHDRY) form a C3H1-type zinc finger.

The polypeptide is Zinc finger CCCH domain-containing protein 45 (Arabidopsis thaliana (Mouse-ear cress)).